The chain runs to 124 residues: Mitochondrial import inner membrane translocase subunit TIM16 (124 aa).

The tract at residues Glu58–Gln109 is J-like. Phosphoserine is present on Ser69.

It belongs to the TIM16/PAM16 family. As to quaternary structure, probable component of the PAM complex at least composed of a mitochondrial HSP70 protein, GRPEL1 or GRPEL2, TIMM44, TIMM16/PAM16 and TIMM14/DNAJC19. Interacts with DNAJC19. Directly interacts with DNAJC15; this interaction counteracts DNAJC15-dependent stimulation of HSPA9 ATPase activity. Associates with the TIM23 complex.

It is found in the mitochondrion inner membrane. Its function is as follows. Regulates ATP-dependent protein translocation into the mitochondrial matrix. Inhibits DNAJC19 stimulation of HSPA9/Mortalin ATPase activity. The sequence is that of Mitochondrial import inner membrane translocase subunit TIM16 (Magmas-ps1) from Rattus norvegicus (Rat).